A 325-amino-acid chain; its full sequence is Elongation factor P--(R)-beta-lysine ligase (325 aa).

A substrate-binding site is contributed by 76–78; sequence SPE. ATP contacts are provided by residues 100-102 and N109; that span reads RNE. A substrate-binding site is contributed by Y118. Residue 244 to 245 participates in ATP binding; that stretch reads EL. E251 serves as a coordination point for substrate. Residue G300 coordinates ATP.

The protein belongs to the class-II aminoacyl-tRNA synthetase family. EpmA subfamily. As to quaternary structure, homodimer.

It carries out the reaction D-beta-lysine + L-lysyl-[protein] + ATP = N(6)-((3R)-3,6-diaminohexanoyl)-L-lysyl-[protein] + AMP + diphosphate + H(+). With EpmB is involved in the beta-lysylation step of the post-translational modification of translation elongation factor P (EF-P) on 'Lys-34'. Catalyzes the ATP-dependent activation of (R)-beta-lysine produced by EpmB, forming a lysyl-adenylate, from which the beta-lysyl moiety is then transferred to the epsilon-amino group of EF-P 'Lys-34'. The protein is Elongation factor P--(R)-beta-lysine ligase of Salmonella typhi.